Consider the following 376-residue polypeptide: Probable cysteine protease RDL3 (376 aa).

The first 27 residues, 1 to 27 (MAISFRTLALLTLSVLLISISLGVVTA), serve as a signal peptide directing secretion. Residues 28–126 (TESQRNEGEV…ERYQYKEGDV (99 aa)) constitute a propeptide, activation peptide. The N-linked (GlcNAc...) asparagine glycan is linked to N80. 2 disulfide bridges follow: C149–C192 and C183–C226. The active site involves C152. A glycan (N-linked (GlcNAc...) asparagine) is linked at N270. C283 and C336 form a disulfide bridge. Catalysis depends on residues H290 and N311. A glycan (N-linked (GlcNAc...) asparagine) is linked at N349.

The protein belongs to the peptidase C1 family. In terms of tissue distribution, expressed in root hairs.

In terms of biological role, probable thiol protease. This Arabidopsis thaliana (Mouse-ear cress) protein is Probable cysteine protease RDL3.